The following is a 908-amino-acid chain: AdoMet-dependent rRNA methyltransferase SPB1 (908 aa).

Residues G57, W59, D77, D93, and D118 each coordinate S-adenosyl-L-methionine. The Proton acceptor role is filled by K158. Residues 378–422 (MDEEEQITEELQKLQQAKLAKTKRERKRANEKKARELLKLQLNMT) are a coiled coil. Disordered regions lie at residues 440–513 (IFDL…YDSY), 535–715 (NFDA…DEVK), and 806–841 (AKGRKKMKAVARMEKAKKKADGVMESEEMGDGEKAR). Positions 464 to 493 (DDGEGMDLASESEEEEDEDEEDDEVLDSDE) are enriched in acidic residues. Over residues 535–545 (NFDAWHGIQEK) the composition is skewed to basic and acidic residues. Composition is skewed to acidic residues over residues 546–564 (SDEEGSDDDDGQDDDEEGG) and 579–591 (DSSDSDSDAEPET). Over residues 592 to 610 (EVPKKIKKVSFEKPARSEK) the composition is skewed to basic and acidic residues. Acidic residues-rich tracts occupy residues 650 to 678 (DGDDEEEEEEDESEEEESDDEDVDMEDAS) and 685 to 712 (EGDDDFEIVPQAPEDDGPEWDVDDEDQD). Residues 816-827 (ARMEKAKKKADG) show a composition bias toward basic and acidic residues.

It belongs to the class I-like SAM-binding methyltransferase superfamily. RNA methyltransferase RlmE family. SPB1 subfamily. Component of the nucleolar and nucleoplasmic pre-60S ribosomal particle.

It localises to the nucleus. Its subcellular location is the nucleolus. It carries out the reaction a ribonucleotide in rRNA + S-adenosyl-L-methionine = a 2'-O-methylribonucleotide in rRNA + S-adenosyl-L-homocysteine + H(+). Required for proper assembly of pre-ribosomal particles during the biogenesis of the 60S ribosomal subunit. In Cryptococcus neoformans var. neoformans serotype D (strain B-3501A) (Filobasidiella neoformans), this protein is AdoMet-dependent rRNA methyltransferase SPB1.